The sequence spans 139 residues: Plastocyanin (139 aa).

A signal peptide spans 1–34; that stretch reads MKLISASLRRFSLAVLTILLVVSSFAVFTPSASA. Residues 35-139 enclose the Plastocyanin-like domain; that stretch reads ETYQVKLGTD…GMVGTITVQG (105 aa). 4 residues coordinate Cu cation: His73, Cys123, His126, and Met131.

This sequence belongs to the plastocyanin family. The cofactor is Cu(2+).

The protein localises to the cellular thylakoid membrane. Its function is as follows. Participates in electron transfer between P700 and the cytochrome b6-f complex in photosystem I. This Nostoc punctiforme (strain ATCC 29133 / PCC 73102) protein is Plastocyanin.